The primary structure comprises 634 residues: MSAEEVLENIRKEIIKKSPKEAKIVDVQFEGPEVVVYVKNPEIFTNEIIKSLAKDLRKRISIRPDPSVLVEPEIAKQKILEIVPEEAEITNFVFDANTGEVIIESKKPGLVIGKEGKTLEMIKKAIRWAPKPVRTPPIQSETIKAIRATLYRERHEVKEILRRIGRRIHRDIVVRGDYWIRVSFLGGAREVGRSCLYVQTPDTRVLIDCGINVACEDKAFPHFDAPEFSIEDLDAVIVTHAHLDHCGFIPGLFRYGYDGPVYCTRPTRDLMTLLQKDYLEIAKKEGKEVPYTSKDIKTCVKHTIPIDYGVTTDISPTIKLTLHNAGHVLGSAIAHLHIGEGLYNLAYTGDIKFETSRLLEPAVCQFPRLETLIIESTYGAYDDVLPEREEAERELLRVVSETTDRGGKVLIPVFGVGRAQELMLVLEEGYNQGIFNAPVYLDGMIWEATAIHTAYPEYLSKEMRQKIFHEGDNPFLSEVFKRVGSTNERRKVIDSDEPCVILATSGMLTGGPSVEYLKHLAPDEKNAIIFVGYQAEGTLGRKVQSGWKEIPIITRNGKTKSIPINLQVYTIEGFSGHSDRKQLIKYIRRLKPSPEKIIMVHGEESKCLDFADTVRRLFKKQTYVPMNLDAIRVK.

The tract at residues 4 to 69 (EEVLENIRKE…ISIRPDPSVL (66 aa)) is KHa. The segment at 70–137 (VEPEIAKQKI…WAPKPVRTPP (68 aa)) is KHb. Residues 179–381 (WIRVSFLGGA…LIIESTYGAY (203 aa)) form a metallo-beta-lactamase N-terminus region. Residues histidine 240, histidine 242, aspartate 244, histidine 245, histidine 327, and aspartate 350 each contribute to the Zn(2+) site. Residues 382 to 575 (DDVLPEREEA…LQVYTIEGFS (194 aa)) are beta-Casp. The interval 576-634 (GHSDRKQLIKYIRRLKPSPEKIIMVHGEESKCLDFADTVRRLFKKQTYVPMNLDAIRVK) is metallo-beta-lactamase C-terminus. Histidine 601 contacts Zn(2+).

Belongs to the metallo-beta-lactamase superfamily. RNA-metabolizing metallo-beta-lactamase-like family. FttA subfamily. In terms of assembly, homodimer. Interacts with RNA polymerase (RNAP), interacts with the Spt4-Spt5 complex. It depends on Zn(2+) as a cofactor.

Its activity is regulated as follows. Optimal NaCl concentration is 100 mM for nuclease activity on RNA. In terms of biological role, terminates transcription on the whole genome. Termination is linked to FttA-mediated RNA cleavage and does not require NTP hydrolysis. Cleaves endonucleolytically at the RNA exit channel of RNA polymerase (RNAP); the 5'-3' exonuclease activity of this protein degrades the nascent RNA released from RNAP. Functionally, an endoribonuclease with no apparent exonuclease activity, has low activity on single-stranded DNA (endodeoxyribonuclease, endoDNase). The sequence is that of Transcription termination factor FttA from Methanocaldococcus jannaschii (strain ATCC 43067 / DSM 2661 / JAL-1 / JCM 10045 / NBRC 100440) (Methanococcus jannaschii).